A 342-amino-acid polypeptide reads, in one-letter code: uncharacterized protein (342 aa).

Residues 3 to 173 form the MurNAc-LAA domain; the sequence is IAIRGGHNFL…LIGYLIAKGI (171 aa).

The protein to C.perfringens CPE1502.

This is an uncharacterized protein from Clostridium perfringens.